The following is a 481-amino-acid chain: NADH-quinone oxidoreductase subunit N (481 aa).

A run of 13 helical transmembrane segments spans residues 9–29, 39–59, 76–96, 104–124, 158–178, 205–225, 232–252, 265–285, 293–313, 318–338, 359–379, 399–419, and 443–463; these read MLPE…GIVV, AVSM…DHVA, CISR…FLCA, FSVV…AGHF, FFIL…LVYG, AFVL…MWAV, PMAA…LLLA, ILYG…LGAL, LLAY…VLHG, AIFH…SVLL, FVAF…PFLG, VAFP…FYCF, and LGLT…LFLA.

This sequence belongs to the complex I subunit 2 family. In terms of assembly, NDH-1 is composed of 14 different subunits. Subunits NuoA, H, J, K, L, M, N constitute the membrane sector of the complex.

The protein localises to the cell inner membrane. It carries out the reaction a quinone + NADH + 5 H(+)(in) = a quinol + NAD(+) + 4 H(+)(out). NDH-1 shuttles electrons from NADH, via FMN and iron-sulfur (Fe-S) centers, to quinones in the respiratory chain. The immediate electron acceptor for the enzyme in this species is believed to be ubiquinone. Couples the redox reaction to proton translocation (for every two electrons transferred, four hydrogen ions are translocated across the cytoplasmic membrane), and thus conserves the redox energy in a proton gradient. This is NADH-quinone oxidoreductase subunit N from Anaplasma marginale (strain Florida).